We begin with the raw amino-acid sequence, 276 residues long: Putative ABC transporter ATP-binding protein MA_4021 (276 aa).

Residues 5 to 247 form the ABC transporter domain; it reads FDLKNISYSY…DLNLLLSTNL (243 aa). 38 to 45 contributes to the ATP binding site; that stretch reads GSNGSGKS.

This sequence belongs to the ABC transporter superfamily.

Its subcellular location is the cell membrane. Probably part of an ABC transporter complex. Responsible for energy coupling to the transport system. The polypeptide is Putative ABC transporter ATP-binding protein MA_4021 (Methanosarcina acetivorans (strain ATCC 35395 / DSM 2834 / JCM 12185 / C2A)).